Consider the following 859-residue polypeptide: Rod cGMP-specific 3',5'-cyclic phosphodiesterase subunit alpha (859 aa).

Glycine 2 carries the N-acetylglycine modification. 2 GAF domains span residues 73 to 222 (QAEK…NLIM) and 254 to 431 (DIER…GWSV). Positions 483–816 (EEEELAEILQ…KEWKALADEY (334 aa)) constitute a PDEase domain. Histidine 559 serves as the catalytic Proton donor. The a divalent metal cation site is built by histidine 563, histidine 599, aspartate 600, and aspartate 720. The interval 821-859 (KGLEEEKQKQQAANQAAAGSQHGGKQPGGGPASKSCCVQ) is disordered. Over residues 830–840 (QQAANQAAAGS) the composition is skewed to low complexity. A compositionally biased stretch (gly residues) spans 841–851 (QHGGKQPGGGP). A Cysteine methyl ester modification is found at cysteine 856. Cysteine 856 is lipidated: S-farnesyl cysteine. Positions 857–859 (CVQ) are cleaved as a propeptide — removed in mature form.

Belongs to the cyclic nucleotide phosphodiesterase family. Oligomer composed of two catalytic chains (alpha and beta), an inhibitory chain (gamma) and the delta chain. The cofactor is a divalent metal cation.

Its subcellular location is the cell membrane. It localises to the cell projection. It is found in the cilium. The protein localises to the photoreceptor outer segment. The catalysed reaction is 3',5'-cyclic GMP + H2O = GMP + H(+). Its function is as follows. Rod-specific cGMP phosphodiesterase that catalyzes the hydrolysis of 3',5'-cyclic GMP. This protein participates in processes of transmission and amplification of the visual signal. The sequence is that of Rod cGMP-specific 3',5'-cyclic phosphodiesterase subunit alpha from Bos taurus (Bovine).